A 690-amino-acid polypeptide reads, in one-letter code: Xylosyl- and glucuronyltransferase LARGE2 (690 aa).

Topologically, residues 1–8 (MLPRGRPR) are cytoplasmic. The chain crosses the membrane as a helical; Signal-anchor for type II membrane protein span at residues 9-29 (AMGAAVLLLLLLLVVGFFLFG). The Lumenal portion of the chain corresponds to 30 to 690 (RDPDYGLGTT…TALQQARSRA (661 aa)). N-linked (GlcNAc...) asparagine glycans are attached at residues Asn-51 and Asn-78. Positions 68 to 343 (LHVAIVCAGY…FLGYDGKLLR (276 aa)) are xylosyltransferase activity. Mn(2+) contacts are provided by Asp-172 and Asp-174. Residue Asn-202 is glycosylated (N-linked (GlcNAc...) asparagine). Positions 344-686 (RELFGCPNQF…LKYLTALQQA (343 aa)) are glucuronyltransferase activity. The Mn(2+) site is built by Asp-492 and Asp-494.

This sequence in the C-terminal section; belongs to the glycosyltransferase 49 family. It in the N-terminal section; belongs to the glycosyltransferase 8 family. The protein belongs to the glycosyltransferase 8 family. As to quaternary structure, interacts with B4GAT1. It depends on Mn(2+) as a cofactor. In terms of tissue distribution, highly expressed in the testis and kidney, but weakly expressed in the heart and brain. Expressed during embryogenesis from 7 dpc.

The protein localises to the golgi apparatus membrane. The enzyme catalyses 3-O-[beta-D-GlcA-(1-&gt;3)-beta-D-Xyl-(1-&gt;4)-Rib-ol-P-Rib-ol-P-3-beta-D-GalNAc-(1-&gt;3)-beta-D-GlcNAc-(1-&gt;4)-(O-6-P-alpha-D-Man)]-Thr-[protein] + UDP-alpha-D-xylose = 3-O-[alpha-D-Xyl-(1-&gt;3)-beta-D-GlcA-(1-&gt;4)-beta-D-Xyl-(1-&gt;4)-Rib-ol-P-Rib-ol-P-3-beta-D-GalNAc-(1-&gt;3)-beta-D-GlcNAc-(1-&gt;4)-(O-6-P-alpha-D-Man)]-Thr-[protein] + UDP + H(+). The catalysed reaction is 3-O-{(1-&gt;[3)-alpha-D-Xyl-(1-&gt;3)-beta-D-GlcA-(1-&gt;](n)-4)-beta-D-Xyl-(1-&gt;4)-Rib-ol-P-Rib-ol-P-3-beta-D-GalNAc-(1-&gt;3)-beta-D-GlcNAc-(1-&gt;4)-O-6-P-alpha-D-Man}-L-Thr-[protein] + UDP-alpha-D-glucuronate = 3-O-{beta-D-GlcA-(1-&gt;[3)-alpha-D-Xyl-(1-&gt;3)-beta-D-GlcA-(1-&gt;](n)-4)-beta-D-Xyl-(1-&gt;4)-Rib-ol-P-Rib-ol-P-3-beta-D-GalNAc-(1-&gt;3)-beta-D-GlcNAc-(1-&gt;4)-O-6-P-alpha-D-Man}-L-Thr-[protein] + UDP + H(+). It carries out the reaction 3-O-{beta-D-GlcA-(1-&gt;[3)-alpha-D-Xyl-(1-&gt;3)-beta-D-GlcA-(1-&gt;](n)-4)-beta-D-Xyl-(1-&gt;4)-Rib-ol-P-Rib-ol-P-3-beta-D-GalNAc-(1-&gt;3)-beta-D-GlcNAc-(1-&gt;4)-O-6-P-alpha-D-Man}-L-Thr-[protein] + UDP-alpha-D-xylose = 3-O-{(1-&gt;[3)-alpha-D-Xyl-(1-&gt;3)-beta-D-GlcA-(1-&gt;](n+1)-4)-beta-D-Xyl-(1-&gt;4)-Rib-ol-P-Rib-ol-P-3-beta-D-GalNAc-(1-&gt;3)-beta-D-GlcNAc-(1-&gt;4)-O-6-P-alpha-D-Man}-L-Thr-[protein] + UDP + H(+). The protein operates within protein modification; protein glycosylation. In terms of biological role, bifunctional glycosyltransferase with both alpha-1,3-xylosyltransferase and beta-1,3-glucuronyltransferase activities involved in the maturation of alpha-dystroglycan (DAG1) by glycosylation leading to DAG1 binding to laminin G-like domain-containing extracellular proteins with high affinity and in a phosphorylated-O-mannosyl trisaccharide dependent manner. Elongates the glucuronyl-beta-1,4-xylose-beta disaccharide primer structure by adding repeating units [-3-Xylose-alpha-1,3-GlcA-beta-1-] to produce a heteropolysaccharide. Supports the maturation of DAG1 more effectively than LARGE1. In addition, can modify both heparan sulfate (HS)- and chondroitin/dermatan sulfate (CS/DS)-proteoglycans (PGs), namely GPC4, with a glycosaminoglycan (GAG)-like polysaccharide composed of xylose and glucuronic acid to confer laminin binding. In Mus musculus (Mouse), this protein is Xylosyl- and glucuronyltransferase LARGE2.